The sequence spans 205 residues: Dephospho-CoA kinase (205 aa).

Residues Lys-4–Lys-203 form the DPCK domain. Gly-12–Val-17 serves as a coordination point for ATP.

Belongs to the CoaE family.

The protein localises to the cytoplasm. The catalysed reaction is 3'-dephospho-CoA + ATP = ADP + CoA + H(+). It participates in cofactor biosynthesis; coenzyme A biosynthesis; CoA from (R)-pantothenate: step 5/5. In terms of biological role, catalyzes the phosphorylation of the 3'-hydroxyl group of dephosphocoenzyme A to form coenzyme A. This is Dephospho-CoA kinase from Bacteroides fragilis (strain ATCC 25285 / DSM 2151 / CCUG 4856 / JCM 11019 / LMG 10263 / NCTC 9343 / Onslow / VPI 2553 / EN-2).